A 289-amino-acid chain; its full sequence is Probable ABC transporter permease protein BRA0749/BS1330_II0742 (289 aa).

6 helical membrane passes run Phe-9–Leu-29, Val-70–Leu-90, Val-99–Trp-119, Ile-144–Val-166, Ile-213–Thr-233, and Glu-260–Ile-280. The ABC transmembrane type-1 domain occupies Leu-65–Tyr-279.

The protein belongs to the binding-protein-dependent transport system permease family. The complex is composed of two ATP-binding proteins (BRA0745), two transmembrane proteins (BRA0749) and a solute-binding protein (BRA0748).

The protein resides in the cell inner membrane. Functionally, probably part of an ABC transporter complex. Probably responsible for the translocation of the substrate across the membrane. The polypeptide is Probable ABC transporter permease protein BRA0749/BS1330_II0742 (Brucella suis biovar 1 (strain 1330)).